We begin with the raw amino-acid sequence, 330 residues long: ADP-L-glycero-D-manno-heptose-6-epimerase (330 aa).

Residues 11-12, 32-33, Lys-39, Lys-54, 75-79, and Asn-92 each bind NADP(+); these read FI, DN, and EGACS. The active-site Proton acceptor is the Tyr-139. Residue Lys-143 participates in NADP(+) binding. Asn-168 contacts substrate. NADP(+)-binding residues include Val-169 and Lys-177. Lys-177 acts as the Proton acceptor in catalysis. Substrate-binding positions include Arg-179, His-186, 200–203, Arg-213, and Tyr-292; that span reads FGEY.

It belongs to the NAD(P)-dependent epimerase/dehydratase family. HldD subfamily. In terms of assembly, homopentamer. Requires NADP(+) as cofactor.

The enzyme catalyses ADP-D-glycero-beta-D-manno-heptose = ADP-L-glycero-beta-D-manno-heptose. It participates in nucleotide-sugar biosynthesis; ADP-L-glycero-beta-D-manno-heptose biosynthesis; ADP-L-glycero-beta-D-manno-heptose from D-glycero-beta-D-manno-heptose 7-phosphate: step 4/4. Its function is as follows. Catalyzes the interconversion between ADP-D-glycero-beta-D-manno-heptose and ADP-L-glycero-beta-D-manno-heptose via an epimerization at carbon 6 of the heptose. The polypeptide is ADP-L-glycero-D-manno-heptose-6-epimerase (Burkholderia cenocepacia (strain HI2424)).